A 743-amino-acid polypeptide reads, in one-letter code: Dynein regulatory complex protein 1 homolog (743 aa).

Composition is skewed to acidic residues over residues 1-10 (MDDNEDELEE) and 19-28 (SVEEEEEVEP). The disordered stretch occupies residues 1–34 (MDDNEDELEEHQELVSDGSVEEEEEVEPDLGPVD). Coiled-coil stretches lie at residues 175–332 (DQIE…VLMN) and 395–416 (KLHS…NNRE). Residues 599-620 (NRLQGAAGGQPDEKEHRSTGDT) are disordered. The stretch at 715–742 (KMRVQYDAEVVFLRRQNEELRHLLQKFT) forms a coiled coil.

Belongs to the DRC1 family.

In Drosophila melanogaster (Fruit fly), this protein is Dynein regulatory complex protein 1 homolog.